The sequence spans 113 residues: U11-theraphotoxin-Hhn1a (113 aa).

An N-terminal signal peptide occupies residues 1–21 (MNTVRVTFLLVFVLAVSLGQA). The propeptide occupies 22–74 (DKDENRMEMQEKAEQGKSYLDFAENLLLQKLEELEAKLLEEDSEESRNSRQKR). Disulfide bonds link C75-C90, C82-C95, and C89-C110.

Belongs to the neurotoxin 14 (magi-1) family. 01 (HNTX-16) subfamily. In terms of tissue distribution, expressed by the venom gland.

It is found in the secreted. In terms of biological role, probable ion channel inhibitor. This is U11-theraphotoxin-Hhn1a from Cyriopagopus hainanus (Chinese bird spider).